The chain runs to 198 residues: Thymidine kinase (198 aa).

ATP is bound by residues 9–16 (STMNAGKS) and 87–90 (DEAQ). The Proton acceptor role is filled by Glu-88. Residues Cys-145, Cys-147, Cys-182, and His-185 each coordinate Zn(2+).

The protein belongs to the thymidine kinase family. As to quaternary structure, homotetramer.

The protein localises to the cytoplasm. The enzyme catalyses thymidine + ATP = dTMP + ADP + H(+). The protein is Thymidine kinase of Ruegeria pomeroyi (strain ATCC 700808 / DSM 15171 / DSS-3) (Silicibacter pomeroyi).